The primary structure comprises 310 residues: Urease accessory protein UreD (310 aa).

This sequence belongs to the UreD family. As to quaternary structure, ureD, UreF and UreG form a complex that acts as a GTP-hydrolysis-dependent molecular chaperone, activating the urease apoprotein by helping to assemble the nickel containing metallocenter of UreC. The UreE protein probably delivers the nickel.

It localises to the cytoplasm. Functionally, required for maturation of urease via the functional incorporation of the urease nickel metallocenter. The protein is Urease accessory protein UreD of Synechococcus sp. (strain RCC307).